The following is a 172-amino-acid chain: Small t antigen (172 aa).

Position 1 is an N-acetylmethionine; by host (methionine 1). A J domain is found at 12–75 (ELMDLLGLER…VKVAHQPDFG (64 aa)). A C4-type; atypical zinc finger spans residues 101–114 (CATKPSAHCPCMLC). The H1C3-type; atypical zinc-finger motif lies at 120–141 (HVYRKFLRRDPLVWIDCYCFDC).

As to quaternary structure, interacts with host PPP2R1A; the interaction inhibits PP2A activity.

It localises to the host cytoplasm. It is found in the host nucleus. In terms of biological role, promotes efficient viral genome replication by accelerating both G1 and S phase progression of the cell cycle. Inhibits host PP2A by binding to the A subunit, thereby displacing lower affinity regulatory B subunit. Inactivation of PP2A in turn results in the transactivation of cyclin A and cyclin D1 promoters. Late during the infection cycle, ST may induce dephosphorylation of host MTOR, leading to the inhibition of cap-dependent translation. May establish and maintain high levels of viral genomes during persistent infection in cell culture. This is Small t antigen from Simian virus 12 (strain wt100) (SV-12).